We begin with the raw amino-acid sequence, 53 residues long: UPF0391 membrane protein GFO_1615 (53 aa).

The next 2 membrane-spanning stretches (helical) occupy residues 4-24 (LIVI…GGVA) and 27-47 (AADI…ISVL).

This sequence belongs to the UPF0391 family.

It is found in the cell membrane. The protein is UPF0391 membrane protein GFO_1615 of Christiangramia forsetii (strain DSM 17595 / CGMCC 1.15422 / KT0803) (Gramella forsetii).